Consider the following 222-residue polypeptide: MTRLKICGIKRTETLALLKELEVDYVGLVFAPSKRQVDAQTAGQLLAAVPGHPPAVGVFVNPTMEELEEVLSEAPLSVIQLHGQETPQFCQQVRERFALPVWKALAVGGEADAALAIQSYQGIVSAFLFDTYDPGQAGGTGKKFSWEQIPALQAACEAADCIIAGGIHAENVGELMGQYQAGIVDVSSGVETDGVKDAQKIKTLVERVKAHEQHSNNYASRA.

Belongs to the TrpF family.

The catalysed reaction is N-(5-phospho-beta-D-ribosyl)anthranilate = 1-(2-carboxyphenylamino)-1-deoxy-D-ribulose 5-phosphate. Its pathway is amino-acid biosynthesis; L-tryptophan biosynthesis; L-tryptophan from chorismate: step 3/5. The protein is N-(5'-phosphoribosyl)anthranilate isomerase of Brevibacillus brevis (strain 47 / JCM 6285 / NBRC 100599).